The following is a 252-amino-acid chain: Triosephosphate isomerase (252 aa).

A substrate-binding site is contributed by 9–11; it reads NWK. The active-site Electrophile is the His96. The active-site Proton acceptor is Glu166. Substrate is bound by residues Gly172, Ser212, and 233–234; that span reads GG.

It belongs to the triosephosphate isomerase family. As to quaternary structure, homodimer.

It is found in the cytoplasm. It catalyses the reaction D-glyceraldehyde 3-phosphate = dihydroxyacetone phosphate. It functions in the pathway carbohydrate biosynthesis; gluconeogenesis. Its pathway is carbohydrate degradation; glycolysis; D-glyceraldehyde 3-phosphate from glycerone phosphate: step 1/1. Its function is as follows. Involved in the gluconeogenesis. Catalyzes stereospecifically the conversion of dihydroxyacetone phosphate (DHAP) to D-glyceraldehyde-3-phosphate (G3P). In Prosthecochloris aestuarii (strain DSM 271 / SK 413), this protein is Triosephosphate isomerase.